A 217-amino-acid polypeptide reads, in one-letter code: GTP-binding protein yptV2 (217 aa).

20 to 27 (GDSGVGKS) serves as a coordination point for GTP. The Effector region motif lies at 42 to 50 (FITTIGIDF). GTP is bound by residues 68–72 (DTAGQ) and 126–129 (NKLD). The interval 198–217 (QPVRLTSGSPSPAQGKSCCR) is disordered. The segment covering 201 to 211 (RLTSGSPSPAQ) has biased composition (polar residues). S-geranylgeranyl cysteine attachment occurs at residues C215 and C216.

Belongs to the small GTPase superfamily. Rab family.

Its subcellular location is the cell membrane. Its function is as follows. Protein transport. Probably involved in vesicular traffic. This is GTP-binding protein yptV2 (YPTV2) from Volvox carteri (Green alga).